We begin with the raw amino-acid sequence, 294 residues long: Protein farnesyltransferase/geranylgeranyltransferase type-1 subunit alpha (294 aa).

5 PFTA repeats span residues 57–91 (YSLRALNLTGFLIMNNPAHYTVWAYRFQILNHTPS), 92–125 (YIDNELEWLDEIAEDFQKNYQVWHHRQKILSLTK), 126–160 (NYERELEFTKKMFEIDSKNYHVWSYRVWILQNFND), 161–194 (YSQELKLTNELLEKDIYNNSAWNHRFYVLFETSK), and 199–233 (SLEEELNYLKDKILFAPDNQSAWNYLCGVLDKSGP).

Belongs to the protein prenyltransferase subunit alpha family. As to quaternary structure, heterodimer of an alpha(cwp1) and a beta(cpp1 or cwg2) subunit. Requires Mg(2+) as cofactor.

The catalysed reaction is L-cysteinyl-[protein] + (2E,6E)-farnesyl diphosphate = S-(2E,6E)-farnesyl-L-cysteinyl-[protein] + diphosphate. It catalyses the reaction geranylgeranyl diphosphate + L-cysteinyl-[protein] = S-geranylgeranyl-L-cysteinyl-[protein] + diphosphate. Catalyzes the transfer of a farnesyl or geranyl-geranyl moiety from farnesyl or geranyl-geranyl diphosphate to a cysteine at the fourth position from the C-terminus of several proteins having the C-terminal sequence Cys-aliphatic-aliphatic-X. The alpha(cwp1) subunit is thought to participate in a stable complex with the substrate. The beta(cpp1 or cwg2) subunits bind the peptide substrate. The protein is Protein farnesyltransferase/geranylgeranyltransferase type-1 subunit alpha (cwp1) of Schizosaccharomyces pombe (strain 972 / ATCC 24843) (Fission yeast).